The primary structure comprises 465 residues: Cysteine--tRNA ligase (465 aa).

Cys-27 contributes to the Zn(2+) binding site. Positions 29 to 39 (PTVYDDAHLGH) match the 'HIGH' region motif. Zn(2+)-binding residues include Cys-207, His-237, and Glu-241. Residues 269 to 273 (KMSKS) carry the 'KMSKS' region motif. Lys-272 contacts ATP.

Belongs to the class-I aminoacyl-tRNA synthetase family. As to quaternary structure, monomer. Requires Zn(2+) as cofactor.

The protein resides in the cytoplasm. The enzyme catalyses tRNA(Cys) + L-cysteine + ATP = L-cysteinyl-tRNA(Cys) + AMP + diphosphate. The sequence is that of Cysteine--tRNA ligase from Helicobacter acinonychis (strain Sheeba).